Consider the following 179-residue polypeptide: Large ribosomal subunit protein uL5 (179 aa).

The protein belongs to the universal ribosomal protein uL5 family. Part of the 50S ribosomal subunit; part of the 5S rRNA/L5/L18/L25 subcomplex. Contacts the 5S rRNA and the P site tRNA. Forms a bridge to the 30S subunit in the 70S ribosome.

Its function is as follows. This is one of the proteins that bind and probably mediate the attachment of the 5S RNA into the large ribosomal subunit, where it forms part of the central protuberance. In the 70S ribosome it contacts protein S13 of the 30S subunit (bridge B1b), connecting the 2 subunits; this bridge is implicated in subunit movement. Contacts the P site tRNA; the 5S rRNA and some of its associated proteins might help stabilize positioning of ribosome-bound tRNAs. The polypeptide is Large ribosomal subunit protein uL5 (Citrifermentans bemidjiense (strain ATCC BAA-1014 / DSM 16622 / JCM 12645 / Bem) (Geobacter bemidjiensis)).